The primary structure comprises 302 residues: UDP-N-acetylenolpyruvoylglucosamine reductase (302 aa).

The FAD-binding PCMH-type domain occupies 29–192 (KVGGPVDLLA…VAVTLQLSED (164 aa)). R172 is a catalytic residue. The active-site Proton donor is the S221. E291 is a catalytic residue.

This sequence belongs to the MurB family. FAD is required as a cofactor.

The protein localises to the cytoplasm. It carries out the reaction UDP-N-acetyl-alpha-D-muramate + NADP(+) = UDP-N-acetyl-3-O-(1-carboxyvinyl)-alpha-D-glucosamine + NADPH + H(+). It participates in cell wall biogenesis; peptidoglycan biosynthesis. Functionally, cell wall formation. The polypeptide is UDP-N-acetylenolpyruvoylglucosamine reductase (Trichlorobacter lovleyi (strain ATCC BAA-1151 / DSM 17278 / SZ) (Geobacter lovleyi)).